The chain runs to 104 residues: Pole-localizer protein TmaR (104 aa).

Coiled-coil stretches lie at residues 13–43 and 76–96; these read RKNK…NLLD and SAEI…LTEE.

The protein belongs to the pole-localizer TmaR family.

The protein resides in the cytoplasm. Functionally, pole-localizer protein involved in the regulation of several cellular processes. The polypeptide is Pole-localizer protein TmaR (Vibrio vulnificus (strain CMCP6)).